Here is a 185-residue protein sequence, read N- to C-terminus: Ribosome-recycling factor (185 aa).

It belongs to the RRF family.

The protein resides in the cytoplasm. Functionally, responsible for the release of ribosomes from messenger RNA at the termination of protein biosynthesis. May increase the efficiency of translation by recycling ribosomes from one round of translation to another. This is Ribosome-recycling factor from Aliivibrio fischeri (strain ATCC 700601 / ES114) (Vibrio fischeri).